We begin with the raw amino-acid sequence, 171 residues long: Cytochrome c oxidase subunit 4 isoform 2, mitochondrial (171 aa).

The transit peptide at 1–28 (MLPRAAWSLVLRKGGGGRRGMHSSEGTT) directs the protein to the mitochondrion. The interval 13 to 32 (KGGGGRRGMHSSEGTTRGGG) is disordered. At 29 to 100 (RGGGKMSPYT…TFAEMNRRSN (72 aa)) the chain is on the mitochondrial matrix side. The helical transmembrane segment at 101–126 (EWKTVMGCVFFFIGFAALVIWWQRVY) threads the bilayer. Residues 127 to 171 (VFPPKPITLTDERKAQQLQRMLDMKVNPVQGLASRWDYEKKQWKK) lie on the Mitochondrial intermembrane side of the membrane.

Belongs to the cytochrome c oxidase IV family. Component of the cytochrome c oxidase (complex IV, CIV), a multisubunit enzyme composed of 14 subunits. The complex is composed of a catalytic core of 3 subunits MT-CO1, MT-CO2 and MT-CO3, encoded in the mitochondrial DNA, and 11 supernumerary subunits COX4I1 (or COX4I2), COX5A, COX5B, COX6A1 (or COX6A2), COX6B1 (or COX6B2), COX6C, COX7A2 (or COX7A1), COX7B, COX7C, COX8A and NDUFA4, which are encoded in the nuclear genome. The complex exists as a monomer or a dimer and forms supercomplexes (SCs) in the inner mitochondrial membrane with NADH-ubiquinone oxidoreductase (complex I, CI) and ubiquinol-cytochrome c oxidoreductase (cytochrome b-c1 complex, complex III, CIII), resulting in different assemblies (supercomplex SCI(1)III(2)IV(1) and megacomplex MCI(2)III(2)IV(2)). Highly expressed in lung.

The protein localises to the mitochondrion inner membrane. Its pathway is energy metabolism; oxidative phosphorylation. In terms of biological role, component of the cytochrome c oxidase, the last enzyme in the mitochondrial electron transport chain which drives oxidative phosphorylation. The respiratory chain contains 3 multisubunit complexes succinate dehydrogenase (complex II, CII), ubiquinol-cytochrome c oxidoreductase (cytochrome b-c1 complex, complex III, CIII) and cytochrome c oxidase (complex IV, CIV), that cooperate to transfer electrons derived from NADH and succinate to molecular oxygen, creating an electrochemical gradient over the inner membrane that drives transmembrane transport and the ATP synthase. Cytochrome c oxidase is the component of the respiratory chain that catalyzes the reduction of oxygen to water. Electrons originating from reduced cytochrome c in the intermembrane space (IMS) are transferred via the dinuclear copper A center (CU(A)) of subunit 2 and heme A of subunit 1 to the active site in subunit 1, a binuclear center (BNC) formed by heme A3 and copper B (CU(B)). The BNC reduces molecular oxygen to 2 water molecules using 4 electrons from cytochrome c in the IMS and 4 protons from the mitochondrial matrix. The sequence is that of Cytochrome c oxidase subunit 4 isoform 2, mitochondrial from Homo sapiens (Human).